Here is a 435-residue protein sequence, read N- to C-terminus: Cyclic 2,3-diphosphoglycerate synthetase (435 aa).

The protein belongs to the cyclic 2,3-diphosphoglycerate synthetase family.

It is found in the cytoplasm. It catalyses the reaction (2R)-2,3-bisphosphoglycerate + ATP + H(+) = cyclic (2R)-2,3-bisphosphoglycerate + ADP + phosphate. Catalyzes the formation of cyclic 2,3-diphosphoglycerate (cDPG) by formation of an intramolecular phosphoanhydride bond at the expense of ATP. In Pyrococcus horikoshii (strain ATCC 700860 / DSM 12428 / JCM 9974 / NBRC 100139 / OT-3), this protein is Cyclic 2,3-diphosphoglycerate synthetase.